A 1401-amino-acid polypeptide reads, in one-letter code: Protein dispatched homolog 2 (1401 aa).

Disordered regions lie at residues 1–91 (MDGD…LAPA) and 113–138 (DRAALCSHGSSLSPSPAPSQRDGTWK). Residues 170-190 (VAVLMLCLAVIFLCTLAGLLG) form a helical membrane-spanning segment. N-linked (GlcNAc...) asparagine glycosylation occurs at N239. The tract at residues 241–264 (SSSHNTLRPAPRGSAQESAVRPRR) is disordered. N-linked (GlcNAc...) asparagine glycosylation is found at N349 and N465. The SSD domain occupies 471 to 643 (GMDLGLKQEL…LVWLPASAVL (173 aa)). A run of 11 helical transmembrane segments spans residues 484–504 (FLVQDTVYPLLALVAIFFGMA), 510–530 (LFLTLMVLLGVLGSLLVAFFL), 542–562 (FVNLAALLLLSSVCANHTLIF), 589–609 (FGYLLLVSGLTTSAAFYASYL), 617–637 (CLALFMGTAVLVHLALTLVWL), 704–724 (YIWICWFAALAAGGAYIAGVS), 964–984 (PAVVLGLALALAFATLLLGTW), 990–1010 (LFSVAAVAGTVLLTVGLLVLL), 1019–1039 (ALFLSASVGLSVDFTVNYCIS), 1064–1084 (AVGAAALFAAGVLMLPATVLL), and 1088–1108 (LGIILMMVKCVSCGFASFFFQ). Disordered stretches follow at residues 1169 to 1192 (ARRRSPSFDTSTATSKLSHRPSVL), 1229 to 1337 (PALQ…NGKR), and 1352 to 1401 (SLPA…GYSS). Residues 1175 to 1184 (SFDTSTATSK) are compositionally biased toward polar residues. Positions 1259-1270 (PLPASPEAPAHS) are enriched in low complexity. Polar residues predominate over residues 1284–1305 (SSASTLEGLSVSDETCLSTSEP). Over residues 1352–1362 (SLPASHHSSLS) the composition is skewed to low complexity. R1366 carries the post-translational modification Omega-N-methylarginine.

This sequence belongs to the dispatched family.

It localises to the membrane. The protein is Protein dispatched homolog 2 of Homo sapiens (Human).